The sequence spans 73 residues: Large ribosomal subunit protein bL28 (73 aa).

The protein belongs to the bacterial ribosomal protein bL28 family.

In Fervidobacterium nodosum (strain ATCC 35602 / DSM 5306 / Rt17-B1), this protein is Large ribosomal subunit protein bL28.